The following is a 349-amino-acid chain: MKFLDEAKVYIRSGDGGNGCVAFRREKYIEFGGPSGGNGGRGGDVIIEVADGLNTLIDYRYQQHFKAQKGTNGMGKDRHGANGKDIVLKVPVGTQILDEDRETLIHDFTKLGERFVLAEGGNGGFGNAHFKSSTNRAPRNANPGQEGEERWIWLRLKLIADAGLVGLPNAGKSTLLSVVSAAKPKIADYPFTTLHPQLGVVDVDGREFVLADIPGLIEGAHEGAGLGDRFLGHVERCQVLLHLVDATCEHAGKAYKTVRNELMAYAGELTDKVEIVALNKIDAVEADELKKQKDRLKRAAKKTPLLISGVAGTGVKEALRALVEVIGEAPVSEKAKGAAQAEPWAPQNV.

Residues 1–159 (MKFLDEAKVY…RWIWLRLKLI (159 aa)) enclose the Obg domain. Residues 160–327 (ADAGLVGLPN…ALRALVEVIG (168 aa)) enclose the OBG-type G domain. GTP is bound by residues 166–173 (GLPNAGKS), 191–195 (FTTLH), 212–215 (DIPG), 279–282 (NKID), and 308–310 (SGV). Positions 173 and 193 each coordinate Mg(2+).

This sequence belongs to the TRAFAC class OBG-HflX-like GTPase superfamily. OBG GTPase family. Monomer. Mg(2+) serves as cofactor.

It localises to the cytoplasm. Functionally, an essential GTPase which binds GTP, GDP and possibly (p)ppGpp with moderate affinity, with high nucleotide exchange rates and a fairly low GTP hydrolysis rate. Plays a role in control of the cell cycle, stress response, ribosome biogenesis and in those bacteria that undergo differentiation, in morphogenesis control. The protein is GTPase Obg of Rhodopseudomonas palustris (strain BisB18).